The chain runs to 365 residues: MSSVIQVNLPQTSYNIIISPNSLGSVGRHLTSLNLEQKILVISNPEIFDYYGEIVINSLKQAGFKVFSHVIPAGETYKTLDSISKIYDTALKHRLERASTLLALGGGVIGDMTGFAAATWLRGINFIQVPTSLLAMVDASIGGKTGVNHPQGKNLIGAFYQPRLVLIDPIVLKTLPVREFRAGMAEVIKYGVIWNQGLFNQLERQKKLDSLDSINLETIQTIITQSCQAKVDVVSQDEKEAGLRAILNYGHTIGHALESLTGYREINHGEAVALGMVAAGKIAVKLGMWKEEMSQRQKNIIQKAALPVIVDYPLKSQAILESLQLDKKVKAGKVRFILPTDIGQVEIREGVPSEVITRVLEEIKM.

Residues 107–111 (GVIGD), 131–132 (TS), lysine 144, and lysine 153 contribute to the NAD(+) site. Residues glutamate 186, histidine 251, and histidine 268 each contribute to the Zn(2+) site.

The protein belongs to the sugar phosphate cyclases superfamily. Dehydroquinate synthase family. The cofactor is Co(2+). It depends on Zn(2+) as a cofactor. NAD(+) is required as a cofactor.

It localises to the cytoplasm. The catalysed reaction is 7-phospho-2-dehydro-3-deoxy-D-arabino-heptonate = 3-dehydroquinate + phosphate. The protein operates within metabolic intermediate biosynthesis; chorismate biosynthesis; chorismate from D-erythrose 4-phosphate and phosphoenolpyruvate: step 2/7. Catalyzes the conversion of 3-deoxy-D-arabino-heptulosonate 7-phosphate (DAHP) to dehydroquinate (DHQ). In Crocosphaera subtropica (strain ATCC 51142 / BH68) (Cyanothece sp. (strain ATCC 51142)), this protein is 3-dehydroquinate synthase.